The primary structure comprises 676 residues: Nicastrin (676 aa).

Residues Met1 to Ala28 form the signal peptide. Residues Asp29–Asp644 are Extracellular-facing. 7 N-linked (GlcNAc...) asparagine glycosylation sites follow: Asn58, Asn336, Asn371, Asn444, Asn480, Asn555, and Asn611. The helical transmembrane segment at Asn645–Ala665 threads the bilayer. Over Lys666 to Asp676 the chain is Cytoplasmic.

Belongs to the nicastrin family. Probable component of the gamma-secretase complex, a complex composed of a presenilin homodimer, nicastrin, APH1 and PEN2.

The protein localises to the membrane. Functionally, probable subunit of the gamma-secretase complex, an endoprotease complex that catalyzes the intramembrane cleavage of integral membrane proteins such as Notch. The chain is Nicastrin from Arabidopsis thaliana (Mouse-ear cress).